A 388-amino-acid polypeptide reads, in one-letter code: Type II secretion system protein F (388 aa).

The tract at residues 1-28 (MTEGDSARQVRQQLREQGLTPLEVNETT) is disordered. Residues 1 to 153 (MTEGDSARQV…HMRTKLLQAM (153 aa)) lie on the Cytoplasmic side of the membrane. Positions 79, 133, and 137 each coordinate Ca(2+). A helical membrane pass occupies residues 154–174 (IYPIVLTLVAVGVISILLTAV). Residues 175–205 (VPKVVAQFEHMGQQLPATTRFLIGTSELMQH) are Periplasmic-facing. The helical transmembrane segment at 206–226 (YGLWFLLLLFIGGFVWRWWLT) threads the bilayer. The Cytoplasmic portion of the chain corresponds to 227–350 (DEKRRRHWHQ…QDREFETQVN (124 aa)). A helical membrane pass occupies residues 351–371 (IALGVFEPLLVVSMAGVVLFI). The Periplasmic portion of the chain corresponds to 372–388 (VMSILQPILELNNMVNL).

Belongs to the GSP F family. As to quaternary structure, type II secretion system is composed of four main components: the outer membrane complex, the inner membrane complex, the cytoplasmic secretion ATPase and the periplasm-spanning pseudopilus. Homodimer. Interacts with ExeE and ExeL components.

It localises to the cell inner membrane. In terms of biological role, component of the type II secretion system inner membrane complex required for the energy-dependent secretion of extracellular factors such as proteases and toxins from the periplasm. The protein is Type II secretion system protein F (exeF) of Aeromonas hydrophila.